Here is a 1755-residue protein sequence, read N- to C-terminus: Transposon Ty1-LR2 Gag-Pol polyprotein (1755 aa).

3 stretches are compositionally biased toward polar residues: residues 1–23 (MESQ…SVTS), 48–60 (TKAN…TPAS), and 127–152 (QSQF…GNTF). Disordered stretches follow at residues 1–93 (MESQ…MMTQ), 126–174 (PQSQ…PPPM), and 352–421 (GSRN…SKST). Positions 153-165 (TDSSSADSDMTST) are enriched in low complexity. Residues 299-401 (NNGIHINNKV…NSKSKTARAH (103 aa)) form an RNA-binding region. The span at 402-418 (NVSTSNNSPSTDNDSIS) shows a compositional bias: low complexity. Ser416 is modified (phosphoserine). The active-site For protease activity; shared with dimeric partner is the Asp461. Residues 583 to 640 (NVHTSESTRKYPYPFIHRMLAHANAPTIRYSLKNNTITYFNESDVDWSSAIDYQCPDC) form an integrase-type zinc finger-like region. Residues 660-835 (NSYEPFQYLH…AGLDISTLLP (176 aa)) enclose the Integrase catalytic domain. Asp671 and Asp736 together coordinate Mg(2+). Disordered regions lie at residues 956 to 1087 (SKAV…ETEK), 1092 to 1111 (RSPS…NIVP), and 1130 to 1187 (DLPL…DNET). Low complexity predominate over residues 960 to 969 (SPTDSTPPST). Residues 1005 to 1015 (STPQISNIEST) show a composition bias toward polar residues. The span at 1038–1053 (ESSHASKSKDFRHSDS) shows a compositional bias: basic and acidic residues. Polar residues-rich tracts occupy residues 1054-1082 (YSEN…QISD) and 1101-1111 (PENNSSHNIVP). A Bipartite nuclear localization signal motif is present at residues 1178 to 1212 (KKRSLEDNETEIKVSRDTWNTKNMRSLEPPRSKKR). Positions 1338–1476 (NNYYITQLDI…DILGLEIKYQ (139 aa)) constitute a Reverse transcriptase Ty1/copia-type domain. Asp1346, Asp1427, Asp1428, Asp1610, Glu1652, and Asp1685 together coordinate Mg(2+). The RNase H Ty1/copia-type domain occupies 1610–1752 (DASYGNQPYY…IKTFKLLTNK (143 aa)).

As to quaternary structure, the capsid protein forms a homotrimer, from which the VLPs are assembled. The protease is a homodimer, whose active site consists of two apposed aspartic acid residues. Post-translationally, initially, virus-like particles (VLPs) are composed of the structural unprocessed proteins Gag and Gag-Pol, and also contain the host initiator methionine tRNA (tRNA(i)-Met) which serves as a primer for minus-strand DNA synthesis, and a dimer of genomic Ty RNA. Processing of the polyproteins occurs within the particle and proceeds by an ordered pathway, called maturation. First, the protease (PR) is released by autocatalytic cleavage of the Gag-Pol polyprotein yielding capsid protein p45 and a Pol-p154 precursor protein. This cleavage is a prerequisite for subsequent processing of Pol-p154 at the remaining sites to release the mature structural and catalytic proteins. Maturation takes place prior to the RT reaction and is required to produce transposition-competent VLPs.

It localises to the cytoplasm. Its subcellular location is the nucleus. It carries out the reaction DNA(n) + a 2'-deoxyribonucleoside 5'-triphosphate = DNA(n+1) + diphosphate. It catalyses the reaction Endonucleolytic cleavage to 5'-phosphomonoester.. Capsid protein (CA) is the structural component of the virus-like particle (VLP), forming the shell that encapsulates the retrotransposons dimeric RNA genome. The particles are assembled from trimer-clustered units and there are holes in the capsid shells that allow for the diffusion of macromolecules. CA also has nucleocapsid-like chaperone activity, promoting primer tRNA(i)-Met annealing to the multipartite primer-binding site (PBS), dimerization of Ty1 RNA and initiation of reverse transcription. Its function is as follows. The aspartyl protease (PR) mediates the proteolytic cleavages of the Gag and Gag-Pol polyproteins after assembly of the VLP. Functionally, reverse transcriptase/ribonuclease H (RT) is a multifunctional enzyme that catalyzes the conversion of the retro-elements RNA genome into dsDNA within the VLP. The enzyme displays a DNA polymerase activity that can copy either DNA or RNA templates, and a ribonuclease H (RNase H) activity that cleaves the RNA strand of RNA-DNA heteroduplexes during plus-strand synthesis and hydrolyzes RNA primers. The conversion leads to a linear dsDNA copy of the retrotransposon that includes long terminal repeats (LTRs) at both ends. In terms of biological role, integrase (IN) targets the VLP to the nucleus, where a subparticle preintegration complex (PIC) containing at least integrase and the newly synthesized dsDNA copy of the retrotransposon must transit the nuclear membrane. Once in the nucleus, integrase performs the integration of the dsDNA into the host genome. The sequence is that of Transposon Ty1-LR2 Gag-Pol polyprotein (TY1B-LR2) from Saccharomyces cerevisiae (strain ATCC 204508 / S288c) (Baker's yeast).